We begin with the raw amino-acid sequence, 421 residues long: ATP-dependent RNA helicase eIF4A (421 aa).

The interval 1–26 (MSNDKGLEEIPEDQSTTPHKPTSNVG) is disordered. Polar residues predominate over residues 13-26 (DQSTTPHKPTSNVG). The short motif at 48 to 76 (DSFDAMELKPELLRGVYAYGFERPSAIQQ) is the Q motif element. The Helicase ATP-binding domain occupies 79-249 (IKPIIKGSDV…TKFMRDPVRI (171 aa)). 92–99 (AQSGTGKT) serves as a coordination point for ATP. Positions 197 to 200 (DEAD) match the DEAD box motif. The Helicase C-terminal domain maps to 260 to 421 (GIKQFYIAVE…EMPMNVADLI (162 aa)).

Belongs to the DEAD box helicase family. eIF4A subfamily. In terms of assembly, component of the eIF4F complex, which composition varies with external and internal environmental conditions. It is composed of at least eIF4A, eIF4E and eIF4G.

The protein resides in the cytoplasm. It carries out the reaction ATP + H2O = ADP + phosphate + H(+). ATP-dependent RNA helicase which is a subunit of the eIF4F complex involved in cap recognition and is required for mRNA binding to ribosome. In the current model of translation initiation, eIF4A unwinds RNA secondary structures in the 5'-UTR of mRNAs which is necessary to allow efficient binding of the small ribosomal subunit, and subsequent scanning for the initiator codon. The protein is ATP-dependent RNA helicase eIF4A (tif1) of Aspergillus oryzae (strain ATCC 42149 / RIB 40) (Yellow koji mold).